We begin with the raw amino-acid sequence, 440 residues long: Gap junction alpha-8 protein (440 aa).

An intramembrane segment occupies 2 to 12 (GDWSFLGNILE). At 13 to 21 (EVNEHSTVI) the chain is on the cytoplasmic side. A helical transmembrane segment spans residues 22–42 (GRVWLTVLFIFRILILGTAAE). At 43–71 (FVWGDEQSDFVCNTQQPGCENVCYDEAFP) the chain is on the extracellular side. 3 disulfide bridges follow: Cys54–Cys201, Cys61–Cys195, and Cys65–Cys190. A helical membrane pass occupies residues 72–92 (ISHIRLWVLQIIFVSTPSLVY). Over 93 to 161 (VGHAVHHVRM…GTLLRTYVCH (69 aa)) the chain is Cytoplasmic. The segment at 108 to 144 (EREAEELSQQSPGNGGERAPLAADQGSVKKSSSSSKG) is disordered. Residues 162 to 182 (IIFKTLFEVGFIVGHYFLYGF) form a helical membrane-spanning segment. Residues 183–210 (RILPLYRCSRWPCPNVVDCFVSRPTEKT) lie on the Extracellular side of the membrane. A helical transmembrane segment spans residues 211–231 (IFILFMLSVASVSLFLNILEM). The Cytoplasmic portion of the chain corresponds to 232–440 (SHLGLKKIRS…SRARSDDLTV (209 aa)). A disordered region spans residues 334–440 (GAQEGVEEEQ…SRARSDDLTV (107 aa)). 2 stretches are compositionally biased toward basic and acidic residues: residues 353–365 (VGDK…RVST) and 375–405 (EEEK…ELTP). Over residues 423-432 (LSRLSKASSR) the composition is skewed to low complexity.

Belongs to the connexin family. Alpha-type (group II) subfamily. A hemichannel or connexon is composed of a hexamer of connexins. A functional gap junction is formed by the apposition of two hemichannels. Forms heteromeric channels with GJA3. Detected in eye lens (at protein level). Eye lens.

Its subcellular location is the cell membrane. The protein localises to the cell junction. It localises to the gap junction. Its function is as follows. Structural component of eye lens gap junctions. Gap junctions are dodecameric channels that connect the cytoplasm of adjoining cells. They are formed by the docking of two hexameric hemichannels, one from each cell membrane. Small molecules and ions diffuse from one cell to a neighboring cell via the central pore. The polypeptide is Gap junction alpha-8 protein (GJA8) (Ovis aries (Sheep)).